The chain runs to 402 residues: LIM homeobox transcription factor 1-beta (402 aa).

LIM zinc-binding domains are found at residues 56–106 (CEGC…CKQD) and 115–168 (CSGC…CKGD). Disordered stretches follow at residues 176–229 (LSSV…LTTQ) and 326–346 (PYGSSDPFQQGLTPPQMPGDH). Residues 219–278 (PKRPRTILTTQQRRAFKASFEVSSKPCRKVRETLAAETGLSVRVVQVWFQNQRAKMKKLA) constitute a DNA-binding region (homeobox). A compositionally biased stretch (polar residues) spans 326-338 (PYGSSDPFQQGLT).

Interacts with DHX9. As to expression, expressed in most tissues. Highest levels in testis, thyroid, duodenum, skeletal muscle, and pancreatic islets.

It is found in the nucleus. In terms of biological role, transcription factor involved in the regulation of podocyte-expressed genes. Essential for the specification of dorsal limb fate at both the zeugopodal and autopodal levels. This is LIM homeobox transcription factor 1-beta (LMX1B) from Homo sapiens (Human).